The sequence spans 361 residues: Cytochrome c peroxidase, mitochondrial (361 aa).

A mitochondrion-targeting transit peptide spans 1–41 (MASAARSASRAFLRSSLRPAVRSSRFALPTQGLRVASRRGY). H122 acts as the Proton acceptor in catalysis. Heme b is bound at residue H245. The active-site Tryptophan radical intermediate is the W261.

It belongs to the peroxidase family. Cytochrome c peroxidase subfamily. As to quaternary structure, forms a one-to-one complex with cytochrome c. The cofactor is heme b.

Its subcellular location is the mitochondrion matrix. The protein localises to the mitochondrion intermembrane space. It carries out the reaction 2 Fe(II)-[cytochrome c] + H2O2 + 2 H(+) = 2 Fe(III)-[cytochrome c] + 2 H2O. In terms of biological role, destroys radicals which are normally produced within the cells and which are toxic to biological systems. This Emericella nidulans (strain FGSC A4 / ATCC 38163 / CBS 112.46 / NRRL 194 / M139) (Aspergillus nidulans) protein is Cytochrome c peroxidase, mitochondrial (ccp1).